A 241-amino-acid chain; its full sequence is ATP synthase subunit a (241 aa).

Helical transmembrane passes span glycine 30–glycine 50, leucine 89–isoleucine 109, isoleucine 128–serine 148, leucine 193–leucine 213, and glycine 214–glycine 234.

The protein belongs to the ATPase A chain family. As to quaternary structure, F-type ATPases have 2 components, CF(1) - the catalytic core - and CF(0) - the membrane proton channel. CF(1) has five subunits: alpha(3), beta(3), gamma(1), delta(1), epsilon(1). CF(0) has four main subunits: a, b, b' and c.

The protein localises to the cellular thylakoid membrane. Key component of the proton channel; it plays a direct role in the translocation of protons across the membrane. This Synechococcus sp. (strain CC9605) protein is ATP synthase subunit a.